Consider the following 440-residue polypeptide: WAS/WASL-interacting protein family member 2 (440 aa).

Residues 1–18 (MPIPPPPPPPPGPPPPPT) show a composition bias toward pro residues. The interval 1–36 (MPIPPPPPPPPGPPPPPTFHQANTEQPKLSRDEQRG) is disordered. In terms of domain architecture, WH2 spans 36–53 (GRGALLQDICKGTKLKKV). Asymmetric dimethylarginine is present on Arg37. The binds actin stretch occupies residues 49–52 (KLKK). 2 disordered regions span residues 56–387 (INDR…DSIT) and 419–440 (RIYP…PILR). Residues 116–133 (PSSRAAAPRPPVSAASGR) show a composition bias toward low complexity. The span at 161 to 172 (RPNTTSSTGMKH) shows a compositional bias: polar residues. 4 stretches are compositionally biased toward pro residues: residues 176 to 193 (APPP…PTPL), 222 to 236 (EGPP…PPSP), 249 to 262 (APPP…PGVP), and 356 to 378 (RGKP…PPPL).

This sequence belongs to the verprolin family. In terms of assembly, interacts with WASL and WASP, and this interaction results in cytoplasmic relocation of these two proteins along actin filaments. Interacts with NCK2 resulting in the localization to sites of focal adhesions. No interaction was seen with WASF2 and WASF3. As to expression, expressed mainly in brain, colon, lung and stomach (at protein level). Ubiquitously expressed, with high expression in brain, kidney, lung, and placenta.

The protein localises to the cytoplasm. Its subcellular location is the cytoskeleton. Functionally, plays an active role in the formation of cell surface protrusions downstream of activated PDGFB receptors. Plays an important role in actin-microspike formation through cooperation with WASL. May cooperate with WASP and WASL to induce mobilization and reorganization of the actin filament system. The protein is WAS/WASL-interacting protein family member 2 (WIPF2) of Homo sapiens (Human).